Here is a 510-residue protein sequence, read N- to C-terminus: Aromatic-L-amino-acid decarboxylase (510 aa).

Residues 1-17 show a composition bias toward polar residues; it reads MSHIPISNTIPPKQTDG. The disordered stretch occupies residues 1–29; it reads MSHIPISNTIPPKQTDGNGKANISPDKLD. Thr-117 lines the substrate pocket. Residues Ala-183, Ser-184, His-227, Asp-305, and Asn-334 each coordinate pyridoxal 5'-phosphate. Substrate is bound at residue His-227. Position 337 is an N6-(pyridoxal phosphate)lysine (Lys-337). The interval 358 to 384 is disordered; that stretch reads NAFNVDPLYLKHDMQGSAPDYRHWQIP.

It belongs to the group II decarboxylase family. As to quaternary structure, homodimer. It depends on pyridoxal 5'-phosphate as a cofactor.

It catalyses the reaction L-dopa + H(+) = dopamine + CO2. It carries out the reaction 5-hydroxy-L-tryptophan + H(+) = serotonin + CO2. Its function is as follows. Catalyzes the decarboxylation of L-3,4-dihydroxyphenylalanine (L-DOPA) to dopamine and L-5-hydroxytryptophan (5-HTP) to serotonin. Catalyzes the formation of serotonin more efficiently than dopamine. Displays no activity to tyrosine. Variation in the synthesis of bioamines may be a factor contributing to natural variation in life span. The chain is Aromatic-L-amino-acid decarboxylase (Ddc) from Drosophila simulans (Fruit fly).